The chain runs to 853 residues: Dynamin-A (853 aa).

The region spanning 22-296 (PLDLPQIVVV…LMFHIRDTLP (275 aa)) is the Dynamin-type G domain. Residues 32–39 (GSQSSGKS) form a G1 motif region. Residue 32–40 (GSQSSGKSS) participates in GTP binding. The G2 motif stretch occupies residues 58–60 (VTR). Residues 138-141 (DLPG) form a G3 motif region. A G4 motif region spans residues 207–210 (TKLD). GTP-binding positions include 207 to 213 (TKLDLMD) and 238 to 241 (NRSQ). A G5 motif region spans residues 237–240 (INRS). Low complexity-rich tracts occupy residues 523-569 (DQYQ…QQNQ) and 590-607 (PAQQ…KGPQ). Residues 523-738 (DQYQQQQQQQ…RYQDDFYGRG (216 aa)) form a disordered region. The span at 610–624 (PPNQSKPSSIPQNGP) shows a compositional bias: polar residues. 2 stretches are compositionally biased toward low complexity: residues 625 to 635 (NNNNNNNNNNN) and 664 to 728 (NNSN…SSYN). The 92-residue stretch at 762-853 (TELIRELLIS…IINEIRDFRN (92 aa)) folds into the GED domain.

The protein belongs to the TRAFAC class dynamin-like GTPase superfamily. Dynamin/Fzo/YdjA family.

It localises to the cytoplasm. Its function is as follows. Function in membrane trafficking processes along the endo-lysosomal pathway. The chain is Dynamin-A (dymA) from Dictyostelium discoideum (Social amoeba).